The primary structure comprises 235 residues: MFGKIVFLLLVALCAGVQSRYLIVSEPVYYIEHYEEPELLASSRVRRDAHGALTLNSDGTSGAVVKVPFAGNDKNIVSAIGSVDLTDRQKLGAATAGVALDNINGHGLSLTDTHIPGFGDKMTAAGKVNVFHNDNHDITAKAFATRNMPDIANVPNFNTVGGGIDYMFKDKIGASASAAHTDFINRNDYSLDGKLNLFKTPDTSIDFNAGFKKFDTPFMKSSWEPNFGFSLSKYF.

The N-terminal stretch at 1 to 19 is a signal peptide; that stretch reads MFGKIVFLLLVALCAGVQS. The propeptide occupies 20 to 47; the sequence is RYLIVSEPVYYIEHYEEPELLASSRVRR.

Belongs to the attacin/sarcotoxin-2 family. Post-translationally, attacin F appears to be derived by proteolytic digestion of attacin E.

Its subcellular location is the secreted. Its function is as follows. Hemolymph antibacterial protein. The protein is Attacin-E of Hyalophora cecropia (Cecropia moth).